A 170-amino-acid polypeptide reads, in one-letter code: Adenine phosphoribosyltransferase (170 aa).

This sequence belongs to the purine/pyrimidine phosphoribosyltransferase family. As to quaternary structure, homodimer.

Its subcellular location is the cytoplasm. The catalysed reaction is AMP + diphosphate = 5-phospho-alpha-D-ribose 1-diphosphate + adenine. It participates in purine metabolism; AMP biosynthesis via salvage pathway; AMP from adenine: step 1/1. Functionally, catalyzes a salvage reaction resulting in the formation of AMP, that is energically less costly than de novo synthesis. The protein is Adenine phosphoribosyltransferase of Lysinibacillus sphaericus (strain C3-41).